The chain runs to 311 residues: Coproporphyrin III ferrochelatase 1 (311 aa).

Residues tyrosine 12, arginine 29, 45-46, serine 53, and tyrosine 124 contribute to the Fe-coproporphyrin III site; that span reads RY. Residues histidine 182 and glutamate 263 each contribute to the Fe(2+) site.

The protein belongs to the ferrochelatase family.

The protein resides in the cytoplasm. It carries out the reaction Fe-coproporphyrin III + 2 H(+) = coproporphyrin III + Fe(2+). It participates in porphyrin-containing compound metabolism; protoheme biosynthesis. Its function is as follows. Involved in coproporphyrin-dependent heme b biosynthesis. Catalyzes the insertion of ferrous iron into coproporphyrin III to form Fe-coproporphyrin III. The protein is Coproporphyrin III ferrochelatase 1 of Bacillus thuringiensis subsp. konkukian (strain 97-27).